Consider the following 217-residue polypeptide: UPF0319 protein VP1009 (217 aa).

The first 21 residues, 1–21 (MRLKTWIVAFFLGLFGTTVNA), serve as a signal peptide directing secretion.

The protein belongs to the UPF0319 family.

The chain is UPF0319 protein VP1009 from Vibrio parahaemolyticus serotype O3:K6 (strain RIMD 2210633).